A 245-amino-acid chain; its full sequence is Uridylate kinase (245 aa).

15–18 (KLSG) is an ATP binding site. The segment at 23–28 (GEEGFG) is involved in allosteric activation by GTP. G57 serves as a coordination point for UMP. G58 and R62 together coordinate ATP. UMP contacts are provided by residues D77 and 138 to 145 (TGNPFCTT). ATP contacts are provided by T165, Y171, and D174.

The protein belongs to the UMP kinase family. As to quaternary structure, homohexamer.

Its subcellular location is the cytoplasm. It catalyses the reaction UMP + ATP = UDP + ADP. It participates in pyrimidine metabolism; CTP biosynthesis via de novo pathway; UDP from UMP (UMPK route): step 1/1. Allosterically activated by GTP. Inhibited by UTP. Catalyzes the reversible phosphorylation of UMP to UDP. This Shewanella putrefaciens (strain CN-32 / ATCC BAA-453) protein is Uridylate kinase.